Consider the following 312-residue polypeptide: Regulation of nuclear pre-mRNA domain-containing protein 1A (312 aa).

S2 is subject to N-acetylserine. The CID domain maps to 2–133 (SAFSEAALEK…QLKHALYGDK (132 aa)). S153, S156, and S285 each carry phosphoserine. Residues 244-286 (LADFLRCQKEALAEKEHKLEEYKRKLARVSLVRKELRARIQSL) adopt a coiled-coil conformation.

It belongs to the UPF0400 (RTT103) family. As to quaternary structure, may form a heterodimer with RPRD1B. Associates with the RNA polymerase II subunit POLR2A (via CTD phosphorylated at 'Ser-2' and 'Ser-7' of the heptad repeats).

It localises to the nucleus. Functionally, interacts with phosphorylated C-terminal heptapeptide repeat domain (CTD) of the largest RNA polymerase II subunit POLR2A, and participates in dephosphorylation of the CTD by RPAP2. May act as a negative regulator of cyclin-D1 (CCND1) and cyclin-E (CCNE1) in the cell cycle. This Mus musculus (Mouse) protein is Regulation of nuclear pre-mRNA domain-containing protein 1A (Rprd1a).